The following is a 247-amino-acid chain: MQYNFKVEAFEGPLDLLLHLIHRYEIDIYNIPVAEITEQYLSYVHTMKELQLDVASEYLVMAATLLQIKSKMLLPKHEEDVLDNGDDFIDDPRQELMERLIEYKKYKQVATELKEREQERAQLYTRPPIDFTSLQQEEETNLPLDVTLYDMLAAFQKLMRRKKAEKPVTTRITRQEIPIEQRMTDILKQLEIQGGRQSFYDLFVDDEREIMVVTFLAVLELMKNQQIIIEQEHNFDEIFVSSYTKSA.

Belongs to the ScpA family. In terms of assembly, component of a cohesin-like complex composed of ScpA, ScpB and the Smc homodimer, in which ScpA and ScpB bind to the head domain of Smc. The presence of the three proteins is required for the association of the complex with DNA.

Its subcellular location is the cytoplasm. Its function is as follows. Participates in chromosomal partition during cell division. May act via the formation of a condensin-like complex containing Smc and ScpB that pull DNA away from mid-cell into both cell halves. The sequence is that of Segregation and condensation protein A from Bacillus anthracis (strain A0248).